The primary structure comprises 416 residues: Isobutyryl-CoA dehydrogenase, mitochondrial (416 aa).

A mitochondrion-targeting transit peptide spans 1 to 21; sequence MISGLFKLSNKQSVLQNATKL. Residues 156–165 and 189–191 contribute to the FAD site; these read YCLTEPGSGS and FIS. A substrate-binding site is contributed by Ser165. Residue 273–276 participates in substrate binding; that stretch reads NGGR. FAD-binding positions include Arg301, 311–312, and 370–374; these read FQ and QLFGG. Glu397 (proton acceptor) is an active-site residue. 399-401 provides a ligand contact to FAD; the sequence is SDA. Arg409 lines the substrate pocket.

It belongs to the acyl-CoA dehydrogenase family. In terms of assembly, homotetramer. FAD serves as cofactor.

Its subcellular location is the mitochondrion. The catalysed reaction is 2-methylpropanoyl-CoA + oxidized [electron-transfer flavoprotein] + H(+) = 2-methylpropenoyl-CoA + reduced [electron-transfer flavoprotein]. It carries out the reaction (2S)-2-methylbutanoyl-CoA + oxidized [electron-transfer flavoprotein] + H(+) = (2E)-2-methylbut-2-enoyl-CoA + reduced [electron-transfer flavoprotein]. The enzyme catalyses propanoyl-CoA + oxidized [electron-transfer flavoprotein] + H(+) = acryloyl-CoA + reduced [electron-transfer flavoprotein]. It participates in amino-acid degradation; L-valine degradation. In terms of biological role, isobutyryl-CoA dehydrogenase which catalyzes one of the steps of the valine catabolic pathway. To a lesser extent, is also able to catalyze the oxidation of (2S)-2-methylbutanoyl-CoA. This chain is Isobutyryl-CoA dehydrogenase, mitochondrial (acad8), found in Dictyostelium discoideum (Social amoeba).